Reading from the N-terminus, the 87-residue chain is U3-theraphotoxin-Hhn1a 3 (87 aa).

A signal peptide spans M1 to A24. The propeptide occupies P25–R52. Intrachain disulfides connect C54–C67, C61–C72, and C66–C79.

It belongs to the neurotoxin 10 (Hwtx-1) family. 51 (Hntx-8) subfamily. Hntx-8 sub-subfamily. In terms of tissue distribution, expressed by the venom gland.

The protein localises to the secreted. In terms of biological role, ion channel inhibitor. This is U3-theraphotoxin-Hhn1a 3 from Cyriopagopus hainanus (Chinese bird spider).